Here is a 586-residue protein sequence, read N- to C-terminus: Phosphomethylpyrimidine synthase (586 aa).

Disordered regions lie at residues 38–59 (IELS…TSGP) and 92–114 (GREI…VFPQ). Residues 92 to 102 (GREIKPEDDGV) are compositionally biased toward basic and acidic residues. Substrate contacts are provided by residues Asn-193, Met-222, Tyr-251, His-287, 307-309 (SRG), 348-351 (DGLR), and Glu-387. His-391 serves as a coordination point for Zn(2+). Residue Tyr-414 participates in substrate binding. His-455 serves as a coordination point for Zn(2+). 3 residues coordinate [4Fe-4S] cluster: Cys-535, Cys-538, and Cys-543.

Belongs to the ThiC family. Requires [4Fe-4S] cluster as cofactor.

The enzyme catalyses 5-amino-1-(5-phospho-beta-D-ribosyl)imidazole + S-adenosyl-L-methionine = 4-amino-2-methyl-5-(phosphooxymethyl)pyrimidine + CO + 5'-deoxyadenosine + formate + L-methionine + 3 H(+). It participates in cofactor biosynthesis; thiamine diphosphate biosynthesis. Its function is as follows. Catalyzes the synthesis of the hydroxymethylpyrimidine phosphate (HMP-P) moiety of thiamine from aminoimidazole ribotide (AIR) in a radical S-adenosyl-L-methionine (SAM)-dependent reaction. The protein is Phosphomethylpyrimidine synthase of Bacillus cytotoxicus (strain DSM 22905 / CIP 110041 / 391-98 / NVH 391-98).